A 207-amino-acid polypeptide reads, in one-letter code: Large ribosomal subunit protein bL25 (207 aa).

A disordered region spans residues 1–20; that stretch reads MANHQIKAQRRKDEGKGASR.

Belongs to the bacterial ribosomal protein bL25 family. CTC subfamily. In terms of assembly, part of the 50S ribosomal subunit; part of the 5S rRNA/L5/L18/L25 subcomplex. Contacts the 5S rRNA. Binds to the 5S rRNA independently of L5 and L18.

Its function is as follows. This is one of the proteins that binds to the 5S RNA in the ribosome where it forms part of the central protuberance. The sequence is that of Large ribosomal subunit protein bL25 from Xylella fastidiosa (strain M12).